A 271-amino-acid chain; its full sequence is Phosphatidylinositol transfer protein alpha isoform (271 aa).

A 1,2-diacyl-sn-glycero-3-phospho-(1D-myo-inositol) is bound by residues threonine 59, lysine 61, glutamate 86, asparagine 90, threonine 97, and lysine 195. At lysine 216 the chain carries N6-acetyllysine. Residues 251-264 (TKRQLDEMRQKDPV) show a composition bias toward basic and acidic residues. The disordered stretch occupies residues 251–271 (TKRQLDEMRQKDPVKGMTADD).

Belongs to the PtdIns transfer protein family. PI transfer class I subfamily. Post-translationally, phosphorylated by PKC in a calcium and phosphatidylserine-dependent manner.

Its subcellular location is the cytoplasm. The protein localises to the nucleus. It catalyses the reaction a 1,2-diacyl-sn-glycero-3-phosphocholine(in) = a 1,2-diacyl-sn-glycero-3-phosphocholine(out). The catalysed reaction is a 1,2-diacyl-sn-glycero-3-phospho-(1D-myo-inositol)(in) = a 1,2-diacyl-sn-glycero-3-phospho-(1D-myo-inositol)(out). Functionally, catalyzes the transfer of phosphatidylinositol (PI) and phosphatidylcholine (PC) between membranes. Shows a preference for PI and PC containing shorter saturated or monosaturated acyl chains at the sn-1 and sn-2 positions. Preference order for PC is C16:1 &gt; C16:0 &gt; C18:1 &gt; C18:0 &gt; C20:4 and for PI is C16:1 &gt; C16:0 &gt; C18:1 &gt; C18:0 &gt; C20:4 &gt; C20:3. The sequence is that of Phosphatidylinositol transfer protein alpha isoform (Pitpna) from Mus musculus (Mouse).